Consider the following 260-residue polypeptide: Phosphate import ATP-binding protein PstB 5 (260 aa).

The 247-residue stretch at 9-255 folds into the ABC transporter domain; it reads IKVKDLSFYY…PLDSRTRDYV (247 aa). 41-48 is an ATP binding site; sequence GPSGCGKS.

The protein belongs to the ABC transporter superfamily. Phosphate importer (TC 3.A.1.7) family. The complex is composed of two ATP-binding proteins (PstB), two transmembrane proteins (PstC and PstA) and a solute-binding protein (PstS).

The protein localises to the cell inner membrane. It carries out the reaction phosphate(out) + ATP + H2O = ADP + 2 phosphate(in) + H(+). Part of the ABC transporter complex PstSACB involved in phosphate import. Responsible for energy coupling to the transport system. The chain is Phosphate import ATP-binding protein PstB 5 from Trichormus variabilis (strain ATCC 29413 / PCC 7937) (Anabaena variabilis).